A 276-amino-acid polypeptide reads, in one-letter code: NAD-capped RNA hydrolase NudC (276 aa).

A substrate-binding site is contributed by R82. Zn(2+) contacts are provided by C112 and C115. E125 contributes to the substrate binding site. 2 residues coordinate Zn(2+): C130 and C133. Y138 contributes to the substrate binding site. The Nudix hydrolase domain maps to 139–262 (PRLSPSMIVL…SIARYLIELY (124 aa)). Positions 172, 188, and 192 each coordinate a divalent metal cation. The Nudix box motif lies at 173–194 (GYVEPGESVEQCVAREVREEVG). Residue 206–213 (QGWPFPHS) coordinates substrate. A divalent metal cation is bound at residue E233. A255 serves as a coordination point for substrate.

Belongs to the Nudix hydrolase family. NudC subfamily. As to quaternary structure, homodimer. It depends on Mg(2+) as a cofactor. The cofactor is Mn(2+). Zn(2+) serves as cofactor.

It carries out the reaction a 5'-end NAD(+)-phospho-ribonucleoside in mRNA + H2O = a 5'-end phospho-adenosine-phospho-ribonucleoside in mRNA + beta-nicotinamide D-ribonucleotide + 2 H(+). The catalysed reaction is NAD(+) + H2O = beta-nicotinamide D-ribonucleotide + AMP + 2 H(+). The enzyme catalyses NADH + H2O = reduced beta-nicotinamide D-ribonucleotide + AMP + 2 H(+). Its function is as follows. mRNA decapping enzyme that specifically removes the nicotinamide adenine dinucleotide (NAD) cap from a subset of mRNAs by hydrolyzing the diphosphate linkage to produce nicotinamide mononucleotide (NMN) and 5' monophosphate mRNA. The NAD-cap is present at the 5'-end of some mRNAs and stabilizes RNA against 5'-processing. Has preference for mRNAs with a 5'-end purine. Catalyzes the hydrolysis of a broad range of dinucleotide pyrophosphates. The sequence is that of NAD-capped RNA hydrolase NudC from Stutzerimonas stutzeri (strain A1501) (Pseudomonas stutzeri).